The sequence spans 289 residues: Toxin tox21A (289 aa).

Positions Met1–Ala14 are cleaved as a signal peptide. Positions Ala15 to Ile27 are excised as a propeptide. Positions Asp270–Cys289 are disordered.

Post-translationally, contains several disulfide bonds. Posterior glands which appear to be connected with the stylet through a series of ducts.

The protein localises to the secreted. Has contracting-paralyzing activity in insect larvae. The polypeptide is Toxin tox21A (Pyemotes tritici (Straw itch mite)).